Here is an 858-residue protein sequence, read N- to C-terminus: MMPGPRPRKGPQARGQGVAAAKQMGLFMEFGPEDMLLGMDEAEDDEDLEAELLALTGEAQTTGKKPAPKGQAPLPMAHIEKLAADCMRDVEEEEEEEGLEEDAELLTELQEVLGVDEETEPLDGDEVADPGGSEEENGLEDTEPPVQTAVLTASAPAAQAGASQGLHALLEERIHNYREAAASAKEAGEAAKARRCERGLKTLESQLASVRRGRKINEDEIPPPVALGKRPLAPQEPANRSPETDPPAPPALESDNPSQPETSLPGISAQPVSDLDPDPRALLSSRQREYKVAALSAKRAGELDRARELMRIGKRFGAVLEALEKGQPVDLSAMPPAPEDLKPQQASQAPTAPSVIPPAVERVQPVMAPDVPATPVAPTESQTVLDALQQRLNKYREAGIQARSGGDERKARMHERIAKQYQDAIRAHRAGRKVNFAELPVPPGFPPIPGLESTMGVEEDAVAATLAAAEKLASAEDSAPADKDEDEPPGHLQGEPPAQAPVAKKPARPTVPSSQRLPEPRASSSKESPSPSVREQLALLEARKLQYQRAALQAKRSQDLEQAKAYLRVAKWLEAQIIQARSGRPVDLSKVPSPLTDEEGDFILIHHEDLRLSQKAEEVYAQLQKMLLEQQEKCLLFSKQFMHQGNVAETTRFEKLAQDRKKQLEILQLAQAQGLDPPTHHFELKTFQTVRIFSELNSTEMHLIIVRGMNLPAPPGVTPDDLDAFVRFEFHYPNSDQAQKSKTAVVKNTNSPEFDQLFKLNINRNHRGFKRVIQSKGIKFEIFHKGSFFRSDKLVGTAHLKLERLENECEIREIVEVLDGRKPTGGKLEVKVRLREPLSGQDVQMVTENWLVLEPRGL.

5 disordered regions span residues 112-164 (VLGV…GASQ), 180-199 (AAAS…CERG), 204-284 (ESQL…ALLS), 329-352 (VDLS…APTA), and 470-533 (EKLA…SPSV). Residues 114-143 (GVDEETEPLDGDEVADPGGSEEENGLEDTE) show a composition bias toward acidic residues. Positions 153–164 (ASAPAAQAGASQ) are enriched in low complexity. The stretch at 166-212 (LHALLEERIHNYREAAASAKEAGEAAKARRCERGLKTLESQLASVRR) forms a coiled coil. The span at 186 to 199 (EAGEAAKARRCERG) shows a compositional bias: basic and acidic residues. Ser-209 is subject to Phosphoserine. Positions 520–532 (PRASSSKESPSPS) are enriched in low complexity. Phosphoserine is present on Ser-593. Residue Thr-596 is modified to Phosphothreonine. The stretch at 611–635 (RLSQKAEEVYAQLQKMLLEQQEKCL) forms a coiled coil. The C2 domain maps to 676–815 (DPPTHHFELK…ENECEIREIV (140 aa)).

It belongs to the CC2D1 family. In terms of assembly, interacts with CHMP4B. Widely distributed in brain and peripheral tissues.

It localises to the nucleus. Its function is as follows. Transcription factor that binds specifically to the DRE (dual repressor element) and represses HTR1A gene transcription in neuronal cells. This chain is Coiled-coil and C2 domain-containing protein 1B (CC2D1B), found in Homo sapiens (Human).